The chain runs to 292 residues: AT-hook motif nuclear-localized protein 23 (292 aa).

The interval 23–100 is disordered; sequence HLHHNSSSDD…SKNKPKPPVI (78 aa). Residues 60 to 79 show a composition bias toward gly residues; sequence SGGGSGSSGGGGGHGGGGDV. A DNA-binding region (a.T hook) is located at residues 82-94; that stretch reads RRPRGRPPGSKNK. Positions 106 to 242 constitute a PPC domain; sequence ANTLRAHILE…EDEQQQQLGG (137 aa).

It is found in the nucleus. Functionally, transcription factor that specifically binds AT-rich DNA sequences related to the nuclear matrix attachment regions (MARs). The polypeptide is AT-hook motif nuclear-localized protein 23 (Arabidopsis thaliana (Mouse-ear cress)).